We begin with the raw amino-acid sequence, 41 residues long: Large ribosomal subunit protein bL36 (41 aa).

Belongs to the bacterial ribosomal protein bL36 family.

The sequence is that of Large ribosomal subunit protein bL36 from Bradyrhizobium diazoefficiens (strain JCM 10833 / BCRC 13528 / IAM 13628 / NBRC 14792 / USDA 110).